Reading from the N-terminus, the 100-residue chain is Succinate dehydrogenase assembly factor 4, mitochondrial (100 aa).

The transit peptide at 1–31 (MFNRNLRAVILKNYNKALTRCLHDAGNLKRP) directs the protein to the mitochondrion. Positions 24 to 100 (DAGNLKRPTP…YSYEGRVTDF (77 aa)) are disordered. Basic and acidic residues-rich tracts occupy residues 36-68 (LPKE…KDFE) and 85-100 (PTVH…VTDF).

It belongs to the SDHAF4 family. As to quaternary structure, interacts with sdh1 in its FAD-bound form.

It localises to the mitochondrion matrix. Its function is as follows. Plays an essential role in the assembly of succinate dehydrogenase (SDH), an enzyme complex (also referred to as respiratory complex II) that is a component of both the tricarboxylic acid (TCA) cycle and the mitochondrial electron transport chain, and which couples the oxidation of succinate to fumarate with the reduction of ubiquinone (coenzyme Q) to ubiquinol. Binds to the flavoprotein subunit sdh1 in its FAD-bound form, blocking the generation of excess reactive oxygen species (ROS) and facilitating its assembly with the iron-sulfur protein subunit sdh2 into the SDH catalytic dimer. This chain is Succinate dehydrogenase assembly factor 4, mitochondrial, found in Schizosaccharomyces pombe (strain 972 / ATCC 24843) (Fission yeast).